A 252-amino-acid polypeptide reads, in one-letter code: MLKSGFYLLGGVVGAASSLPAFLAATTRSIWDPVNAGDVAAVGEITALTALEHMKQSMMSDRTGRMILRTQPRVTDETLEFASRQPPGTFGHRYAQFMKFNRFTPNGRTPVAHVADPTLAYVMQRQRETHDFLHTCIGCGRTVEEEIIVKLLEWRHTGLPIGLLAVIGSLPWLSRQQLRNMELYFEWAEVNAPNQRHGEVYIPYITNVWWESYLDKPYEQLLADTGITPIDVFLQQKKGKAALANGEAIDGK.

Zn(2+) is bound by residues histidine 130, aspartate 131, histidine 134, and glutamate 146.

It belongs to the COQ4 family. Component of a multi-subunit COQ enzyme complex. It depends on Zn(2+) as a cofactor.

The protein localises to the mitochondrion inner membrane. The enzyme catalyses a 4-hydroxy-3-methoxy-5-(all-trans-polyprenyl)benzoate + H(+) = a 2-methoxy-6-(all-trans-polyprenyl)phenol + CO2. It functions in the pathway cofactor biosynthesis; ubiquinone biosynthesis. Its function is as follows. Lyase that catalyzes the C1-decarboxylation of 4-hydroxy-3-methoxy-5-(all-trans-polyprenyl)benzoic acid into 2-methoxy-6-(all-trans-polyprenyl)phenol during ubiquinone biosynthesis. The sequence is that of Ubiquinone biosynthesis protein COQ4 homolog 2, mitochondrial from Trypanosoma cruzi (strain CL Brener).